Consider the following 319-residue polypeptide: Malate dehydrogenase (319 aa).

NAD(+)-binding positions include 11–16 and Asp-36; that span reads GAGNVG. Substrate-binding residues include Arg-85 and Arg-91. NAD(+) contacts are provided by residues Asn-98 and 121 to 123; that span reads VSN. 2 residues coordinate substrate: Asn-123 and Arg-154. The Proton acceptor role is filled by His-178.

Belongs to the LDH/MDH superfamily. MDH type 3 family.

The enzyme catalyses (S)-malate + NAD(+) = oxaloacetate + NADH + H(+). In terms of biological role, catalyzes the reversible oxidation of malate to oxaloacetate. This chain is Malate dehydrogenase, found in Sulfurimonas denitrificans (strain ATCC 33889 / DSM 1251) (Thiomicrospira denitrificans (strain ATCC 33889 / DSM 1251)).